The primary structure comprises 30 residues: Photosystem I reaction center subunit XII (30 aa).

Residues 7 to 29 form a helical membrane-spanning segment; it reads LIAFFLAFTAGILAIKLGQALYD.

The protein belongs to the PsaM family.

The protein resides in the plastid. The protein localises to the chloroplast thylakoid membrane. This chain is Photosystem I reaction center subunit XII, found in Pinus thunbergii (Japanese black pine).